The sequence spans 435 residues: Methylenetetrahydrofolate--tRNA-(uracil-5-)-methyltransferase TrmFO (435 aa).

9–14 (GGGLAG) is a binding site for FAD.

The protein belongs to the MnmG family. TrmFO subfamily. FAD is required as a cofactor.

The protein resides in the cytoplasm. The enzyme catalyses uridine(54) in tRNA + (6R)-5,10-methylene-5,6,7,8-tetrahydrofolate + NADH + H(+) = 5-methyluridine(54) in tRNA + (6S)-5,6,7,8-tetrahydrofolate + NAD(+). It catalyses the reaction uridine(54) in tRNA + (6R)-5,10-methylene-5,6,7,8-tetrahydrofolate + NADPH + H(+) = 5-methyluridine(54) in tRNA + (6S)-5,6,7,8-tetrahydrofolate + NADP(+). Catalyzes the folate-dependent formation of 5-methyl-uridine at position 54 (M-5-U54) in all tRNAs. The protein is Methylenetetrahydrofolate--tRNA-(uracil-5-)-methyltransferase TrmFO of Geobacter sp. (strain M21).